Here is a 50-residue protein sequence, read N- to C-terminus: RCPXHLQEYFYTSSKCSMAAVVFITRKNRQVCANPEKKWVREYINSLELS.

Belongs to the intercrine beta (chemokine CC) family.

It is found in the secreted. Its function is as follows. Chemoattractant for blood monocytes, memory T-helper cells and eosinophils. Causes the release of histamine from basophils and activates eosinophils. May activate several chemokine receptors including CCR1, CCR3, CCR4 and CCR5. May also be an agonist of the G protein-coupled receptor GPR75. Together with GPR75, may play a role in neuron survival through activation of a downstream signaling pathway involving the PI3, Akt and MAP kinases. By activating GPR75 may also play a role in insulin secretion by islet cells. In Sus scrofa (Pig), this protein is C-C motif chemokine 5 (CCL5).